Here is a 579-residue protein sequence, read N- to C-terminus: CTP synthase (579 aa).

The interval 1-281 (MPALRKHPQT…DAYVVRRLNL (281 aa)) is amidoligase domain. Ser23 contributes to the CTP binding site. Ser23 contacts UTP. ATP contacts are provided by residues 24 to 29 (SLGKGL) and Asp81. Mg(2+) is bound by residues Asp81 and Glu155. Residues 162–164 (DIE), 202–207 (KTKPTQ), and Lys238 contribute to the CTP site. UTP is bound by residues 202 to 207 (KTKPTQ) and Lys238. Residues 306-554 (RIALVGKYID…IGAALDYKAA (249 aa)) enclose the Glutamine amidotransferase type-1 domain. Residue Gly369 coordinates L-glutamine. The active-site Nucleophile; for glutamine hydrolysis is the Cys396. L-glutamine-binding positions include 397–400 (LGLQ), Glu419, and Arg480. Residues His527 and Glu529 contribute to the active site.

Belongs to the CTP synthase family. Homotetramer.

The enzyme catalyses UTP + L-glutamine + ATP + H2O = CTP + L-glutamate + ADP + phosphate + 2 H(+). It carries out the reaction L-glutamine + H2O = L-glutamate + NH4(+). The catalysed reaction is UTP + NH4(+) + ATP = CTP + ADP + phosphate + 2 H(+). The protein operates within pyrimidine metabolism; CTP biosynthesis via de novo pathway; CTP from UDP: step 2/2. Its activity is regulated as follows. Allosterically activated by GTP, when glutamine is the substrate; GTP has no effect on the reaction when ammonia is the substrate. The allosteric effector GTP functions by stabilizing the protein conformation that binds the tetrahedral intermediate(s) formed during glutamine hydrolysis. Inhibited by the product CTP, via allosteric rather than competitive inhibition. Catalyzes the ATP-dependent amination of UTP to CTP with either L-glutamine or ammonia as the source of nitrogen. Regulates intracellular CTP levels through interactions with the four ribonucleotide triphosphates. This Mycobacterium sp. (strain KMS) protein is CTP synthase.